Reading from the N-terminus, the 398-residue chain is 1-deoxy-D-xylulose 5-phosphate reductoisomerase (398 aa).

Positions 10, 11, 12, 13, 38, and 124 each coordinate NADPH. Residue Lys125 coordinates 1-deoxy-D-xylulose 5-phosphate. Glu126 contacts NADPH. Asp150 contributes to the Mn(2+) binding site. 4 residues coordinate 1-deoxy-D-xylulose 5-phosphate: Ser151, Glu152, Ser176, and His199. Glu152 lines the Mn(2+) pocket. Gly205 serves as a coordination point for NADPH. 1-deoxy-D-xylulose 5-phosphate is bound by residues Ser212, Asn217, Lys218, and Glu221. Glu221 is a binding site for Mn(2+).

The protein belongs to the DXR family. Requires Mg(2+) as cofactor. Mn(2+) serves as cofactor.

The enzyme catalyses 2-C-methyl-D-erythritol 4-phosphate + NADP(+) = 1-deoxy-D-xylulose 5-phosphate + NADPH + H(+). It participates in isoprenoid biosynthesis; isopentenyl diphosphate biosynthesis via DXP pathway; isopentenyl diphosphate from 1-deoxy-D-xylulose 5-phosphate: step 1/6. Catalyzes the NADPH-dependent rearrangement and reduction of 1-deoxy-D-xylulose-5-phosphate (DXP) to 2-C-methyl-D-erythritol 4-phosphate (MEP). The chain is 1-deoxy-D-xylulose 5-phosphate reductoisomerase from Rippkaea orientalis (strain PCC 8801 / RF-1) (Cyanothece sp. (strain PCC 8801)).